Reading from the N-terminus, the 226-residue chain is Uracil-DNA glycosylase (226 aa).

Residue Asp-65 is the Proton acceptor of the active site.

This sequence belongs to the uracil-DNA glycosylase (UDG) superfamily. UNG family.

The protein resides in the cytoplasm. The catalysed reaction is Hydrolyzes single-stranded DNA or mismatched double-stranded DNA and polynucleotides, releasing free uracil.. Excises uracil residues from the DNA which can arise as a result of misincorporation of dUMP residues by DNA polymerase or due to deamination of cytosine. The polypeptide is Uracil-DNA glycosylase (Bacillus pumilus (strain SAFR-032)).